Here is a 329-residue protein sequence, read N- to C-terminus: Acetyl-coenzyme A carboxylase carboxyl transferase subunit alpha (329 aa).

The 255-residue stretch at 40 to 294 (QLETLAARRR…KNALEKHLSE (255 aa)) folds into the CoA carboxyltransferase C-terminal domain.

The protein belongs to the AccA family. Acetyl-CoA carboxylase is a heterohexamer composed of biotin carboxyl carrier protein (AccB), biotin carboxylase (AccC) and two subunits each of ACCase subunit alpha (AccA) and ACCase subunit beta (AccD).

The protein localises to the cytoplasm. It catalyses the reaction N(6)-carboxybiotinyl-L-lysyl-[protein] + acetyl-CoA = N(6)-biotinyl-L-lysyl-[protein] + malonyl-CoA. It functions in the pathway lipid metabolism; malonyl-CoA biosynthesis; malonyl-CoA from acetyl-CoA: step 1/1. In terms of biological role, component of the acetyl coenzyme A carboxylase (ACC) complex. First, biotin carboxylase catalyzes the carboxylation of biotin on its carrier protein (BCCP) and then the CO(2) group is transferred by the carboxyltransferase to acetyl-CoA to form malonyl-CoA. This chain is Acetyl-coenzyme A carboxylase carboxyl transferase subunit alpha, found in Prochlorococcus marinus (strain NATL2A).